The sequence spans 346 residues: Sensor histidine kinase GraS (346 aa).

A run of 2 helical transmembrane segments spans residues 15-35 (MNWI…SLID) and 43-63 (LFYI…LTYF). A Histidine kinase domain is found at 126–332 (EFVHDIKTPV…TVRLIFPLQN (207 aa)).

As to quaternary structure, interacts with GraX.

The protein localises to the cell membrane. The enzyme catalyses ATP + protein L-histidine = ADP + protein N-phospho-L-histidine.. Its function is as follows. Member of the two-component regulatory system GraR/GraS involved in resistance against cationic antimicrobial peptides (CAMPs). Functions as a sensor protein kinase which phosphorylates GraR through the auxiliary protein GraX. In turn, GraR up-regulates many genes such as adhesins, exoproteins, transporters, toxins, and proteins involved in cell wall synthesis. Down-regulates the expression of many genes involved in RNA and amino acid synthesis or glycolysis. The sequence is that of Sensor histidine kinase GraS (graS) from Staphylococcus aureus (strain Mu50 / ATCC 700699).